The chain runs to 171 residues: uncharacterized protein (171 aa).

The interval 123–171 is disordered; the sequence is CTKRDLRNDPPPAYQPDDPLKDLRKNFEKKEKPTWNDVEKKKNGVFEFH. The span at 140–171 shows a compositional bias: basic and acidic residues; the sequence is DPLKDLRKNFEKKEKPTWNDVEKKKNGVFEFH.

This is an uncharacterized protein from Caenorhabditis elegans.